The primary structure comprises 616 residues: E3 ubiquitin-protein ligase DTX4 (616 aa).

2 consecutive WWE domains span residues 1–78 (MLLA…PVRR) and 79–155 (NYYD…RVRR). 2 disordered regions span residues 223–254 (VGKLPQPPGPGAKPLDTTGTIRGPGKTAPSQV) and 355–387 (PPPVSKSEIKSIPGVSNTSRKTTKKQAKKGKTP). Over residues 375 to 384 (KTTKKQAKKG) the composition is skewed to basic residues. An RING-type; atypical zinc finger spans residues 406–465 (CTICMERLTAPSGYKGPQPTVKPDLVGKLSRCGHIYHIYCLVAMYNNGNKDGSLQCPTCK).

Belongs to the Deltex family. As to quaternary structure, interacts with NLRP4. In terms of tissue distribution, expressed in brain, testis, embryonic fibroblasts and thymocytes.

It localises to the cytoplasm. It catalyses the reaction S-ubiquitinyl-[E2 ubiquitin-conjugating enzyme]-L-cysteine + [acceptor protein]-L-lysine = [E2 ubiquitin-conjugating enzyme]-L-cysteine + N(6)-ubiquitinyl-[acceptor protein]-L-lysine.. It functions in the pathway protein modification; protein ubiquitination. Its function is as follows. Functions as a ubiquitin ligase protein in vivo, mediating 'Lys48'-linked polyubiquitination and promoting degradation of TBK1, targeting to TBK1 requires interaction with NLRP4. Regulator of Notch signaling, a signaling pathway involved in cell-cell communications that regulates a broad spectrum of cell-fate determinations. The sequence is that of E3 ubiquitin-protein ligase DTX4 (Dtx4) from Mus musculus (Mouse).